We begin with the raw amino-acid sequence, 463 residues long: UDP-N-acetylmuramoylalanine--D-glutamate ligase (463 aa).

An ATP-binding site is contributed by Gly126–Thr132.

This sequence belongs to the MurCDEF family.

It localises to the cytoplasm. The enzyme catalyses UDP-N-acetyl-alpha-D-muramoyl-L-alanine + D-glutamate + ATP = UDP-N-acetyl-alpha-D-muramoyl-L-alanyl-D-glutamate + ADP + phosphate + H(+). It functions in the pathway cell wall biogenesis; peptidoglycan biosynthesis. Its function is as follows. Cell wall formation. Catalyzes the addition of glutamate to the nucleotide precursor UDP-N-acetylmuramoyl-L-alanine (UMA). This is UDP-N-acetylmuramoylalanine--D-glutamate ligase from Idiomarina loihiensis (strain ATCC BAA-735 / DSM 15497 / L2-TR).